Consider the following 1459-residue polypeptide: Endogenous retrovirus group K member 7 Pol protein (1459 aa).

One can recognise a Reverse transcriptase domain in the interval 57-245 (LEKGHIEPSF…TPFHYLGMQI (189 aa)). Positions 161-164 (LPQG) match the LPQG motif. The YXDD motif lies at 195 to 198 (YIDD). The RNase H type-1 domain occupies 460 to 590 (LENALTVFTD…ADLLVSSALI (131 aa)). Mg(2+) contacts are provided by Asp469, Glu497, Asp517, and Asp582. The Integrase-type zinc-finger motif lies at 587–628 (SALIKAQELHALTHVNAAGLKNKFDVTWKQAKDIVQHCTQCQ). Residues His596, His600, Cys624, and Cys627 each contribute to the Zn(2+) site. Residues 642-803 (RGLCPNALWQ…TSAEQHLTGK (162 aa)) enclose the Integrase catalytic domain. Positions 811–859 (KLIWWKDNKNKTWEIGKVITWGRGFACVSPGENQLPVWIPTRHLKFYNE) form a DNA-binding region, integrase-type.

It belongs to the beta type-B retroviral polymerase family. HERV class-II K(HML-2) pol subfamily.

The catalysed reaction is DNA(n) + a 2'-deoxyribonucleoside 5'-triphosphate = DNA(n+1) + diphosphate. It carries out the reaction Endonucleolytic cleavage to 5'-phosphomonoester.. In terms of biological role, early post-infection, the reverse transcriptase converts the viral RNA genome into double-stranded viral DNA. The RNase H domain of the reverse transcriptase performs two functions. It degrades the RNA template and specifically removes the RNA primer from the RNA/DNA hybrid. Following nuclear import, the integrase catalyzes the insertion of the linear, double-stranded viral DNA into the host cell chromosome. Endogenous Pol proteins may have kept, lost or modified their original function during evolution. The chain is Endogenous retrovirus group K member 7 Pol protein (ERVK-7) from Homo sapiens (Human).